We begin with the raw amino-acid sequence, 413 residues long: Scarecrow-like protein 21 (413 aa).

Residues 41–413 form the GRAS domain; that stretch reads IVEAISRGDL…RILVSSCAWK (373 aa). Residues 48-108 form a leucine repeat I (LRI) region; the sequence is GDLKLVLVAC…VARLAASGSS (61 aa). The tract at residues 127-192 is VHIID; it reads VYVLHEVCPY…GGAPNIRITG (66 aa). The VHIID motif lies at 158 to 162; the sequence is IHIID. The tract at residues 201–233 is leucine repeat II (LRII); it reads TVKKRLEKLAKKFDVPFRFNAVSRPSCEVEVEN. The tract at residues 242–336 is PFYRE; sequence LGVNFAYMLH…QHCMARDVVN (95 aa). The segment at 339–413 is SAW; sequence ACEGAERIER…RILVSSCAWK (75 aa).

The protein belongs to the GRAS family. In terms of assembly, interacts with Meloidogyne incognita 16D10. In terms of tissue distribution, expressed in seedlings, roots, cotyledons, leaves and flowers.

Its subcellular location is the nucleus. Its function is as follows. Probable transcription factor involved in plant development. This chain is Scarecrow-like protein 21 (SCL21), found in Arabidopsis thaliana (Mouse-ear cress).